Consider the following 163-residue polypeptide: Campylobacter invasion antigen D (163 aa).

The MKD signature appears at lysine 135–leucine 145.

As to quaternary structure, interacts with the host cell protein IQGAP1, thus displacing RACGAP1 from the IQGAP1 complex.

The protein resides in the secreted. The protein localises to the host cytoplasm. Its subcellular location is the host cytosol. In terms of biological role, effector protein required for the development of acute disease and colon inflammatory lesions. Required for maximal host cell invasion and maximal secretion of the inflammatory chemokine interleukin-8 (IL-8) from host cells. Acts by activating the host MAP kinase signaling pathways ERK-1/2 and p38 to promote both cellular invasion and the release of IL-8. CiaD mediated activation of ERK-1/2 leads to the phosphorylation of host cortactin (CTTN) on serine residues and association of cortactin with N-WASP, promoting actin cytoskeleton rearrangement, membrane ruffling and host cell invasion. In addition, maximal host cell invasion requires interaction with the host cell protein IQGAP1, a Ras GTPase-activating-like protein. Binding to IQGAP1 facilitates the activation of the Rho GTPases RAC1 and CDC42, further promoting actin reorganization and bacterial uptake. CiaD promotes RAC1 activation by excluding RACGAP1 from the IQGAP1 complex, preventing the deactivation of RAC1. CiaD probably activates ERK signaling upstream or independently of IQGAP1. This Campylobacter jejuni subsp. jejuni serotype O:2 (strain ATCC 700819 / NCTC 11168) protein is Campylobacter invasion antigen D.